Reading from the N-terminus, the 660-residue chain is Probable E3 ubiquitin ligase complex SCF subunit sconB (660 aa).

The segment covering 1-13 (MHNENSVLRDAKE) has biased composition (basic and acidic residues). Disordered stretches follow at residues 1 to 34 (MHNE…MTPY) and 86 to 108 (LGTG…RRQA). The F-box domain occupies 175–221 (IDFITALPPEISFKILSYLDTASLCRAAQVSRGWKCLADDDVVWHRM). WD repeat units lie at residues 340 to 379 (GHTN…RTLT), 381 to 419 (HTSG…STYT), 421 to 457 (HLGG…TFLL), 459 to 500 (GHSD…RTFQ), 542 to 586 (SQVS…CLRT), 587 to 626 (FFGH…CERT), and 629 to 660 (GHSG…SFKN). The tract at residues 521–553 (GHDASHEEDSNASVSGDESPSSQVSCSPTAAFF) is disordered. Polar residues predominate over residues 531 to 548 (NASVSGDESPSSQVSCSP).

The protein belongs to the WD repeat MET30/SCONB/SCON-2 family. Component of the SCF(sconB) E3 ubiquitin ligase complex.

It functions in the pathway protein modification; protein ubiquitination. In terms of biological role, component of the SCF(sconB) E3 ubiquitin ligase complex involved in the regulation of sulfur metabolite repression, probably by mediating the inactivation or degradation of the metR transcription factor. This Talaromyces marneffei (strain ATCC 18224 / CBS 334.59 / QM 7333) (Penicillium marneffei) protein is Probable E3 ubiquitin ligase complex SCF subunit sconB (sconB).